An 85-amino-acid polypeptide reads, in one-letter code: Small ribosomal subunit protein uS17 (85 aa).

The protein belongs to the universal ribosomal protein uS17 family. As to quaternary structure, part of the 30S ribosomal subunit.

Functionally, one of the primary rRNA binding proteins, it binds specifically to the 5'-end of 16S ribosomal RNA. This Lachnospira eligens (strain ATCC 27750 / DSM 3376 / VPI C15-48 / C15-B4) (Eubacterium eligens) protein is Small ribosomal subunit protein uS17.